A 2812-amino-acid chain; its full sequence is Zonadhesin (2812 aa).

A signal peptide spans 1-17; it reads MVPPVWTLLLLVGAALF. Residues 18 to 2757 lie on the Extracellular side of the membrane; it reads RKEKPPDQKL…DAPPPRKPAS (2740 aa). MAM domains lie at 39-204, 209-368, and 371-536; these read TQCD…SCNR, QTCS…PCGE, and PQCD…TCPV. The disordered stretch occupies residues 61-84; sequence EDWVRASGPSPTGSTGAPGGYPNG. Residues 66–75 are compositionally biased toward low complexity; it reads ASGPSPTGST. Asn333 and Asn493 each carry an N-linked (GlcNAc...) asparagine glycan. 2 disordered regions span residues 545–884 and 904–929; these read VSPV…PTEK and EKPT…KPTI. The span at 547-558 shows a compositional bias: low complexity; the sequence is PVSSTGPSETTG. Polar residues predominate over residues 559–570; sequence LTENPTISTKKP. Residues 573-1041 are 66 X heptapeptide repeats (approximate) (mucin-like domain); sequence SIEKPSVTTE…GTTTTSRSST (469 aa). Composition is skewed to low complexity over residues 592 to 603, 651 to 675, 713 to 842, 853 to 868, and 916 to 929; these read TIPTEKPTISTE, TEKP…MEEP, SPEK…STEK, STEK…TISP, and STEK…KPTI. The 50-residue stretch at 1044–1093 folds into the TIL 1 domain; that stretch reads CPPNARYESCACPASCKSPRPSCGPLCREGCVCNPGFLFSDNHCIQASSC. In terms of domain architecture, VWFC 1 spans 1103–1148; sequence EPGAEWFSPNCTEHCRCWPGSRVECQISQCGTHTVCQLKNGQYGCH. Asn1112 and Asn1188 each carry an N-linked (GlcNAc...) asparagine glycan. The VWFD 1 domain maps to 1154-1331; the sequence is ATCLVYGDPH…TDQDEDQECQ (178 aa). 2 disulfide bridges follow: Cys1156–Cys1291 and Cys1178–Cys1330. A compositionally biased stretch (basic and acidic residues) spans 1302–1316; it reads HLKLDGSPAGDKEEL. A disordered region spans residues 1302 to 1323; sequence HLKLDGSPAGDKEELGNSWQTD. The TIL 2 domain occupies 1426 to 1479; that stretch reads CPPNSKYSLCAKPCPDTCHSGFSGMFCSDRCVEACECNPGFVLSGLECIPRSQC. Residues 1480–1535 enclose the VWFC 2 domain; the sequence is GCLHPAGSYFKVGERWYKPGCKELCVCESNNRIRCQPWRCRAQEFCGQQDGIYGCH. Positions 1540–1720 constitute a VWFD 2 domain; that stretch reads ATCTASGDPH…LPESSEPGCF (181 aa). 2 cysteine pairs are disulfide-bonded: Cys1542/Cys1680 and Cys1564/Cys1719. N-linked (GlcNAc...) asparagine glycosylation is found at Asn1685 and Asn1804. The TIL 3 domain occupies 1812-1867; sequence CPPGSSYSPCSSPCPDTCSSINNPRDCPKALPCAESCECQKGHILSGTSCVPLGQC. Positions 1868–1924 constitute a VWFC 3 domain; it reads GCTDPAGSYHPVGERWYTENTCTRLCTCSVHNNITCFQSTCKPNQICWALDGLLHCR. Asn1900 and Asn1946 each carry an N-linked (GlcNAc...) asparagine glycan. In terms of domain architecture, VWFD 3 spans 1929-2108; the sequence is GVCQLPGESH…KDKDIDPSCQ (180 aa). Disulfide bonds link Cys1931-Cys2069 and Cys1953-Cys2107. Residue Asn2203 is glycosylated (N-linked (GlcNAc...) asparagine). The TIL 4 domain maps to 2211–2267; sequence CPAYSSYTNCLPSCSPSCWDLDGRCEGAKVPSACAEGCICQPGYVLSEDKCVPRSQC. Residues 2268-2329 enclose the VWFC 4 domain; sequence GCKDAHGGSI…NSNCVSDKSE (62 aa). A VWFD 4 domain is found at 2329–2505; it reads EQCSVYGDPR…SWEVKTEDAL (177 aa). A disulfide bridge connects residues Cys2331 and Cys2468. Residues Asn2542 and Asn2701 are each glycosylated (N-linked (GlcNAc...) asparagine). The VWFC 5 domain occupies 2652-2797; that stretch reads CGCTSNGIYY…KREKTQEGDR (146 aa). An EGF-like domain is found at 2708–2744; the sequence is PESPCLQNPCQNDGQCREQGATFTCECEVGYGGGLCM. Cystine bridges form between Cys2712-Cys2723, Cys2717-Cys2732, and Cys2734-Cys2743. A helical transmembrane segment spans residues 2758 to 2778; that stretch reads NLVGVLLGLLVPVVVVLLAVT. Over 2779 to 2812 the chain is Cytoplasmic; that stretch reads RECIYRTRRKREKTQEGDRLARLVDTDTVLDCAC.

In terms of assembly, probably forms covalent oligomers. In terms of tissue distribution, in testis, primarily in haploid spermatids.

The protein localises to the cell membrane. Binds in a species-specific manner to the zona pellucida of the egg. May be involved in gamete recognition and/or signaling. The polypeptide is Zonadhesin (ZAN) (Homo sapiens (Human)).